Reading from the N-terminus, the 565-residue chain is NAD-dependent malic enzyme (565 aa).

Catalysis depends on tyrosine 104, which acts as the Proton donor. Residue arginine 157 coordinates NAD(+). Lysine 175 serves as the catalytic Proton acceptor. A divalent metal cation is bound by residues glutamate 246, aspartate 247, and aspartate 270. Positions 270 and 418 each coordinate NAD(+).

This sequence belongs to the malic enzymes family. Homotetramer. The cofactor is Mg(2+). Requires Mn(2+) as cofactor.

It carries out the reaction (S)-malate + NAD(+) = pyruvate + CO2 + NADH. It catalyses the reaction oxaloacetate + H(+) = pyruvate + CO2. This chain is NAD-dependent malic enzyme, found in Escherichia coli (strain K12 / MC4100 / BW2952).